The following is a 388-amino-acid chain: Succinate--CoA ligase [ADP-forming] subunit beta (388 aa).

One can recognise an ATP-grasp domain in the interval 9–244 (KQIFAKYKLP…PSQDDPREAL (236 aa)). Residues Lys46, 53–55 (GRG), Glu99, Ala102, and Glu107 each bind ATP. Residues Asn199 and Asp213 each coordinate Mg(2+). Substrate contacts are provided by residues Asn264 and 321–323 (GIV).

It belongs to the succinate/malate CoA ligase beta subunit family. As to quaternary structure, heterotetramer of two alpha and two beta subunits. Requires Mg(2+) as cofactor.

The enzyme catalyses succinate + ATP + CoA = succinyl-CoA + ADP + phosphate. It carries out the reaction GTP + succinate + CoA = succinyl-CoA + GDP + phosphate. It participates in carbohydrate metabolism; tricarboxylic acid cycle; succinate from succinyl-CoA (ligase route): step 1/1. Functionally, succinyl-CoA synthetase functions in the citric acid cycle (TCA), coupling the hydrolysis of succinyl-CoA to the synthesis of either ATP or GTP and thus represents the only step of substrate-level phosphorylation in the TCA. The beta subunit provides nucleotide specificity of the enzyme and binds the substrate succinate, while the binding sites for coenzyme A and phosphate are found in the alpha subunit. This Glaesserella parasuis serovar 5 (strain SH0165) (Haemophilus parasuis) protein is Succinate--CoA ligase [ADP-forming] subunit beta.